The primary structure comprises 419 residues: Serine hydroxymethyltransferase (419 aa).

Residues Leu121 and 125–127 (GHL) contribute to the (6S)-5,6,7,8-tetrahydrofolate site. Lys229 is subject to N6-(pyridoxal phosphate)lysine. 354-356 (SPF) lines the (6S)-5,6,7,8-tetrahydrofolate pocket.

This sequence belongs to the SHMT family. In terms of assembly, homodimer. Pyridoxal 5'-phosphate serves as cofactor.

The protein localises to the cytoplasm. The enzyme catalyses (6R)-5,10-methylene-5,6,7,8-tetrahydrofolate + glycine + H2O = (6S)-5,6,7,8-tetrahydrofolate + L-serine. The protein operates within one-carbon metabolism; tetrahydrofolate interconversion. It participates in amino-acid biosynthesis; glycine biosynthesis; glycine from L-serine: step 1/1. Functionally, catalyzes the reversible interconversion of serine and glycine with tetrahydrofolate (THF) serving as the one-carbon carrier. This reaction serves as the major source of one-carbon groups required for the biosynthesis of purines, thymidylate, methionine, and other important biomolecules. Also exhibits THF-independent aldolase activity toward beta-hydroxyamino acids, producing glycine and aldehydes, via a retro-aldol mechanism. This chain is Serine hydroxymethyltransferase, found in Coxiella burnetii (strain RSA 493 / Nine Mile phase I).